We begin with the raw amino-acid sequence, 371 residues long: MEPDRQAEIAALDSALTTVERVLDVEGLRSRIEKLEHEASDPKLWDDQTRAQRVTSELSHTQGELRRVEELRRRLEDLPVLYELAAEEEGAAAGEALTEADAEFKALRADIEATEVRTLLSGEYDEREALVTIRSGAGGVDAADWAEMLMRMYVRWAEQHKYPVEVFDTSYAEEAGIKSATFAVHAPFAYGTLSVEQGTHRLVRISPFDNQSRRQTSFAEVEVLPVVETTDHIDIPEGDVRVDVYRSSGPGGQSVNTTDSAVRLTHIPTGIVVTCQNEKSQLQNKVAAMRVLQAKLLERKRIEERAELDALKGDGGSSWGNQMRSYVLHPYQMVKDLRTEYEVGNPATVLDGDIDGFLEAGIRWRNRKDDD.

N5-methylglutamine is present on Q253.

This sequence belongs to the prokaryotic/mitochondrial release factor family. Post-translationally, methylated by PrmC. Methylation increases the termination efficiency of RF2.

It localises to the cytoplasm. In terms of biological role, peptide chain release factor 2 directs the termination of translation in response to the peptide chain termination codons UGA and UAA. The polypeptide is Peptide chain release factor 2 (Mycobacterium ulcerans (strain Agy99)).